The following is a 322-amino-acid chain: Putative heme-binding peroxidase (322 aa).

Residue His-38 is the Proton acceptor of the active site. His-162 contacts heme b. The active-site Tryptophan radical intermediate is the Trp-178. Positions 288–322 are disordered; it reads ISAPKKSNHPTGPAKGAQGGCPVAASQGGCPRAKL.

The protein belongs to the peroxidase family. Cytochrome c peroxidase subfamily. Requires heme b as cofactor.

Destroys radicals which are normally produced within the cells and which are toxic to biological systems. This is Putative heme-binding peroxidase from Aspergillus fumigatus (strain ATCC MYA-4609 / CBS 101355 / FGSC A1100 / Af293) (Neosartorya fumigata).